The sequence spans 590 residues: UvrABC system protein C (590 aa).

The 75-residue stretch at 11 to 85 folds into the GIY-YIG domain; it reads ETPGVYLWKR…IKAHRPLYNV (75 aa). The 36-residue stretch at 194 to 229 folds into the UVR domain; sequence DGLLQELEAKMREAARRLEFERAAEIRDQMEALRAF.

This sequence belongs to the UvrC family. In terms of assembly, interacts with UvrB in an incision complex.

The protein resides in the cytoplasm. The UvrABC repair system catalyzes the recognition and processing of DNA lesions. UvrC both incises the 5' and 3' sides of the lesion. The N-terminal half is responsible for the 3' incision and the C-terminal half is responsible for the 5' incision. This Thermus thermophilus (strain ATCC 27634 / DSM 579 / HB8) protein is UvrABC system protein C.